A 121-amino-acid polypeptide reads, in one-letter code: Large ribosomal subunit protein bL20 (121 aa).

The protein belongs to the bacterial ribosomal protein bL20 family.

Binds directly to 23S ribosomal RNA and is necessary for the in vitro assembly process of the 50S ribosomal subunit. It is not involved in the protein synthesizing functions of that subunit. This is Large ribosomal subunit protein bL20 from Wolbachia sp. subsp. Drosophila simulans (strain wRi).